Reading from the N-terminus, the 295-residue chain is Nucleotide-binding protein YjiE (295 aa).

Position 12–19 (12–19 (GMSGAGKT)) interacts with ATP. 63–66 (DMRS) provides a ligand contact to GTP.

The protein belongs to the RapZ-like family.

In terms of biological role, displays ATPase and GTPase activities. The protein is Nucleotide-binding protein YjiE (yjiE) of Lactococcus lactis subsp. lactis (strain IL1403) (Streptococcus lactis).